The primary structure comprises 342 residues: Probable deoxyhypusine synthase (342 aa).

Lys-307 functions as the Nucleophile in the catalytic mechanism.

The protein belongs to the deoxyhypusine synthase family. NAD(+) is required as a cofactor.

It carries out the reaction [eIF5A protein]-L-lysine + spermidine = [eIF5A protein]-deoxyhypusine + propane-1,3-diamine. The protein operates within protein modification; eIF5A hypusination. Functionally, catalyzes the NAD-dependent oxidative cleavage of spermidine and the subsequent transfer of the butylamine moiety of spermidine to the epsilon-amino group of a specific lysine residue of the eIF-5A precursor protein to form the intermediate deoxyhypusine residue. This chain is Probable deoxyhypusine synthase (dys), found in Pyrococcus horikoshii (strain ATCC 700860 / DSM 12428 / JCM 9974 / NBRC 100139 / OT-3).